The primary structure comprises 1240 residues: Cohesin subunit SA-3 (1240 aa).

Residues M1–K25 are compositionally biased toward low complexity. Residues M1–S108 form a disordered region. Over residues R97–S108 the composition is skewed to polar residues. One can recognise an SCD domain in the interval F324 to M409. 2 disordered regions span residues A1077–I1154 and D1213–F1240. Polar residues predominate over residues G1115–A1125. Residues V1126–G1141 show a composition bias toward basic residues. S1218 is modified (phosphoserine).

This sequence belongs to the SCC3 family. Component of the meiosis-specific cohesin complex, which also contains the SMC1 (SMC1A or SMC1B) and SMC3 heterodimer. Such complex likely contains RAD21, or the meiosis-specific related protein REC8. Interacts with CCDC79/TERB1; recruiting cohesin to telomeres to develop structural rigidity. Phosphorylated. As to expression, testis specific.

The protein resides in the nucleus. It localises to the chromosome. The protein localises to the centromere. Its function is as follows. Meiosis specific component of cohesin complex. The cohesin complex is required for the cohesion of sister chromatids after DNA replication. The cohesin complex apparently forms a large proteinaceous ring within which sister chromatids can be trapped. At anaphase, the complex is cleaved and dissociates from chromatin, allowing sister chromatids to segregate. The meiosis-specific cohesin complex probably replaces mitosis specific cohesin complex when it dissociates from chromatin during prophase I. The sequence is that of Cohesin subunit SA-3 (Stag3) from Mus musculus (Mouse).